The chain runs to 320 residues: Cytochrome f (320 aa).

The first 35 residues, 1-35 (MQTRNTFSWIREEITRSISVLLMIYIITWASISSA), serve as a signal peptide directing secretion. Heme-binding residues include Tyr-36, Cys-56, Cys-59, and His-60. The helical transmembrane segment at 286–306 (VQGLLFFLGSVVLAQIFLVLK) threads the bilayer.

The protein belongs to the cytochrome f family. As to quaternary structure, the 4 large subunits of the cytochrome b6-f complex are cytochrome b6, subunit IV (17 kDa polypeptide, petD), cytochrome f and the Rieske protein, while the 4 small subunits are PetG, PetL, PetM and PetN. The complex functions as a dimer. Heme serves as cofactor.

Its subcellular location is the plastid. It localises to the chloroplast thylakoid membrane. In terms of biological role, component of the cytochrome b6-f complex, which mediates electron transfer between photosystem II (PSII) and photosystem I (PSI), cyclic electron flow around PSI, and state transitions. This chain is Cytochrome f, found in Lobularia maritima (Sweet alyssum).